Reading from the N-terminus, the 284-residue chain is MYVVSTKQMLNNAQRGGYAVPAFNIHNLETMQVVVETAANLHAPVIIAGTPGTFTHAGTENLLALVSAMAKQYHHPLAIHLDHHTKFDDIAQKVRSGVRSVMIDASHLPFAQNISRVKEVVDFCHRFDVSVEAELGQLGGQEDDVQVNEADALYTNPVQAREFAEATGIDSLAVAIGTAHGMYASAPVLDFSRLENIRQWVNLPLVLHGASGLSTKDIQQTIKLGICKINVATELKNAFSQALKNYLTEHPEATDPRDYLQSAKSAMRDVVSKVIADCGCEGRA.

Residue D82 is the Proton donor of the active site. Residues H83 and H180 each coordinate Zn(2+). A dihydroxyacetone phosphate-binding site is contributed by G181. Position 208 (H208) interacts with Zn(2+). Dihydroxyacetone phosphate-binding positions include 209–211 (GAS) and 230–233 (NVAT).

This sequence belongs to the class II fructose-bisphosphate aldolase family. TagBP aldolase GatY subfamily. In terms of assembly, forms a complex with GatZ. Requires Zn(2+) as cofactor.

It catalyses the reaction D-tagatofuranose 1,6-bisphosphate = D-glyceraldehyde 3-phosphate + dihydroxyacetone phosphate. It participates in carbohydrate metabolism; D-tagatose 6-phosphate degradation; D-glyceraldehyde 3-phosphate and glycerone phosphate from D-tagatose 6-phosphate: step 2/2. Catalytic subunit of the tagatose-1,6-bisphosphate aldolase GatYZ, which catalyzes the reversible aldol condensation of dihydroxyacetone phosphate (DHAP or glycerone-phosphate) with glyceraldehyde 3-phosphate (G3P) to produce tagatose 1,6-bisphosphate (TBP). Requires GatZ subunit for full activity and stability. Is involved in the catabolism of galactitol. The protein is D-tagatose-1,6-bisphosphate aldolase subunit GatY of Escherichia coli O17:K52:H18 (strain UMN026 / ExPEC).